Reading from the N-terminus, the 87-residue chain is uncharacterized protein (87 aa).

To bacteriophage lambda exonuclease exo.

This is an uncharacterized protein from Escherichia coli (strain K12).